Consider the following 490-residue polypeptide: ATP synthase subunit beta (490 aa).

173 to 180 (GGAGVGKT) lines the ATP pocket.

The protein belongs to the ATPase alpha/beta chains family. As to quaternary structure, F-type ATPases have 2 components, CF(1) - the catalytic core - and CF(0) - the membrane proton channel. CF(1) has five subunits: alpha(3), beta(3), gamma(1), delta(1), epsilon(1). CF(0) has three main subunits: a(1), b(2) and c(9-12). The alpha and beta chains form an alternating ring which encloses part of the gamma chain. CF(1) is attached to CF(0) by a central stalk formed by the gamma and epsilon chains, while a peripheral stalk is formed by the delta and b chains.

The protein localises to the cell membrane. The enzyme catalyses ATP + H2O + 4 H(+)(in) = ADP + phosphate + 5 H(+)(out). Its function is as follows. Produces ATP from ADP in the presence of a proton gradient across the membrane. The catalytic sites are hosted primarily by the beta subunits. The polypeptide is ATP synthase subunit beta (Bifidobacterium longum subsp. infantis (strain ATCC 15697 / DSM 20088 / JCM 1222 / NCTC 11817 / S12)).